Reading from the N-terminus, the 365-residue chain is Methionine import ATP-binding protein MetN (365 aa).

One can recognise an ABC transporter domain in the interval 17–256 (IVFEHVTKEF…PQSETTQRFL (240 aa)). 53 to 60 (GHSGAGKS) provides a ligand contact to ATP. The segment at 346–365 (SNSAAPTTSATVPTPTEEAH) is disordered.

The protein belongs to the ABC transporter superfamily. Methionine importer (TC 3.A.1.24) family. The complex is composed of two ATP-binding proteins (MetN), two transmembrane proteins (MetI) and a solute-binding protein (MetQ).

Its subcellular location is the cell membrane. It catalyses the reaction L-methionine(out) + ATP + H2O = L-methionine(in) + ADP + phosphate + H(+). The catalysed reaction is D-methionine(out) + ATP + H2O = D-methionine(in) + ADP + phosphate + H(+). Functionally, part of the ABC transporter complex MetNIQ involved in methionine import. Responsible for energy coupling to the transport system. The polypeptide is Methionine import ATP-binding protein MetN (Cutibacterium acnes (strain DSM 16379 / KPA171202) (Propionibacterium acnes)).